The sequence spans 348 residues: Dihydroorotase (348 aa).

2 residues coordinate Zn(2+): histidine 17 and histidine 19. Substrate-binding positions include 19–21 and asparagine 45; that span reads HLR. Positions 103, 140, and 178 each coordinate Zn(2+). The residue at position 103 (lysine 103) is an N6-carboxylysine. Residue histidine 140 coordinates substrate. Substrate is bound at residue leucine 223. A Zn(2+)-binding site is contributed by aspartate 251. The active site involves aspartate 251. Residues histidine 255 and alanine 267 each contribute to the substrate site.

The protein belongs to the metallo-dependent hydrolases superfamily. DHOase family. Class II DHOase subfamily. Homodimer. Zn(2+) is required as a cofactor.

It catalyses the reaction (S)-dihydroorotate + H2O = N-carbamoyl-L-aspartate + H(+). Its pathway is pyrimidine metabolism; UMP biosynthesis via de novo pathway; (S)-dihydroorotate from bicarbonate: step 3/3. Functionally, catalyzes the reversible cyclization of carbamoyl aspartate to dihydroorotate. The sequence is that of Dihydroorotase from Shigella sonnei (strain Ss046).